A 434-amino-acid polypeptide reads, in one-letter code: UDP-N-acetylglucosamine 1-carboxyvinyltransferase 1 (434 aa).

Phosphoenolpyruvate is bound at residue 22-23 (KN). Arg-93 is a UDP-N-acetyl-alpha-D-glucosamine binding site. Catalysis depends on Cys-117, which acts as the Proton donor. At Cys-117 the chain carries 2-(S-cysteinyl)pyruvic acid O-phosphothioketal. UDP-N-acetyl-alpha-D-glucosamine contacts are provided by residues 122-126 (RPIDQ), Asp-306, and Val-328.

This sequence belongs to the EPSP synthase family. MurA subfamily.

It is found in the cytoplasm. It catalyses the reaction phosphoenolpyruvate + UDP-N-acetyl-alpha-D-glucosamine = UDP-N-acetyl-3-O-(1-carboxyvinyl)-alpha-D-glucosamine + phosphate. The protein operates within cell wall biogenesis; peptidoglycan biosynthesis. Functionally, cell wall formation. Adds enolpyruvyl to UDP-N-acetylglucosamine. In Bacillus anthracis, this protein is UDP-N-acetylglucosamine 1-carboxyvinyltransferase 1.